Here is a 189-residue protein sequence, read N- to C-terminus: uncharacterized protein (189 aa).

The stretch at 31 to 54 (KCENIDDLANRYEVSKQEVEKVFK) forms a coiled coil. EF-hand domains lie at 47–82 (QEVEKVFKIFQLMDDDGSGTISSSEVAKMLNELGID), 83–118 (VSPKVVQAVMRSSDVSGDGQIDFEEFLAAVTSKIKL), 120–155 (TVKADVQLMLSKIDNNPEKVISAEELVVAWSETVST), and 157–189 (ITVKEACALIQQADTQGRGKATIHEFITMCQTV). Residues D60, D62, S64, T66, E71, D96, S98, D100, Q102, E107, D133, N135, E137, and E144 each coordinate Ca(2+).

This is an uncharacterized protein from Caenorhabditis elegans.